The sequence spans 135 residues: Lactoylglutathione lyase (135 aa).

The VOC domain occupies 2–126; the sequence is RLLHTMLRVG…DGYKIELIEE (125 aa). His5 contributes to the Ni(2+) binding site. Position 9 (Arg9) interacts with substrate. Ni(2+) is bound at residue Glu56. Positions 60 and 74 each coordinate substrate. Ni(2+)-binding residues include His74 and Glu122. Catalysis depends on Glu122, which acts as the Proton donor/acceptor.

This sequence belongs to the glyoxalase I family. Homodimer. It depends on Ni(2+) as a cofactor.

It carries out the reaction (R)-S-lactoylglutathione = methylglyoxal + glutathione. It participates in secondary metabolite metabolism; methylglyoxal degradation; (R)-lactate from methylglyoxal: step 1/2. Functionally, catalyzes the conversion of hemimercaptal, formed from methylglyoxal and glutathione, to S-lactoylglutathione. The protein is Lactoylglutathione lyase (gloA) of Escherichia coli O157:H7.